Here is a 1005-residue protein sequence, read N- to C-terminus: MIMDNQKSTSKTTLLKLMLLRAWKERWTDCQWGINVKAVLTRGVSGDVYNLADCILQQAVVGSGANTLFLSYLKHSLCAHLISHAAVLKRISKYDHFEMHHCLIALLEFLESIIGGVTCRGKQEEGLLTKAMLSLVYWLMQIYEHAIETFSENRSLTTEQQEVVEKTANVLEKIVQSQFLLGVVFVGKFEDPELFGMLAKKCLEIENLTVKSGFVPPVVSQKNVTVNDYIRKVASIETETLEIKEFDGKGVEPITYCMQPLIAIDILFNPNCDTQMYVLEFLSIQALKGFPLSRLYCEIIRACLTCLNNVSGTSRESYICAFTFIKVPQIMRQIHLQTRVLTPNDFEDAKLDYSPDVVEAFELLLQDSAILDFMDAKCACNTVEYLLNEMLKHHLINEKYSKLIAAKRDGITSSLQKLDLNTNQHSIVKFVLRAEPPLVGILKTLSSDYNKVQEALLGMLCQVLSGNSFELILSVATVEGKLKTFVAGLIKCNENSKQVPGEMGKPAMTRAALFDVSFLMLVFIVQNYGSEGVLTDGTDSFFEKWVRECMVEKHKSKSPMNMVKLCDQNKVDELIVSLNSPDGLKATSLKWQEICANIPGLLYQVLLAWENETLSTGEIKKFLDSLKSRFCCFSICATSWLCAYMQIIRQDELLKPMNMIQQFVTNISSEEMMQQEYLKERLGLTVQIIRKMQIDFQRLPVASPKMRNQLQSQSLVSQAPLEEQFEEVWKGVLEKGWLPIEATLALENLLQSCGPFWLVDKLVQQIFHCKYIREMNKTMDIVFAIMHLDIERCTIALLSQLVPMMLLNKLQISEIVDPFSRVLAKLCVYCIVATMEAPAVPTKKRSRAAITAEGDELDTLCSTPKMRKIGSESCDSSSSDFMLEQVLAARDNPAPLKEPLQGCLQTLFRTFSQYIVSDELSPKIFFMFQLLSLLVEVGKDRIKPVLKLIPNGLIQNMMKINATDDMTVGFILRLYDLNTASGRQFAMSDLCLFRNIQMRKDSIKL.

The protein belongs to the Mediator complex subunit 24 family. As to quaternary structure, component of the Mediator complex.

Its subcellular location is the nucleus. In terms of biological role, component of the Mediator complex, a coactivator involved in the regulated transcription of nearly all RNA polymerase II-dependent genes. Mediator functions as a bridge to convey information from gene-specific regulatory proteins to the basal RNA polymerase II transcription machinery. Mediator is recruited to promoters by direct interactions with regulatory proteins and serves as a scaffold for the assembly of a functional preinitiation complex with RNA polymerase II and the general transcription factors. The sequence is that of Mediator of RNA polymerase II transcription subunit 24 (MED24) from Aedes aegypti (Yellowfever mosquito).